The following is a 631-amino-acid chain: Integrator complex subunit 10 (631 aa).

Positions 545–570 (FELTSSPNSSGTPTATTVAGGSQSRR) are enriched in polar residues. Positions 545–577 (FELTSSPNSSGTPTATTVAGGSQSRRIGTRGAD) are disordered.

This sequence belongs to the Integrator subunit 10 family. Belongs to the multiprotein complex Integrator, at least composed of IntS1, IntS2, IntS3, IntS4, omd/IntS5, IntS6, defl/IntS7, IntS8, IntS9, IntS10, IntS11, IntS12, asun/IntS13, IntS14 and IntS15. The core complex associates with protein phosphatase 2A subunits mts/PP2A and Pp2A-29B, to form the Integrator-PP2A (INTAC) complex.

Its subcellular location is the nucleus. In terms of biological role, component of the integrator complex, a multiprotein complex that terminates RNA polymerase II (Pol II) transcription in the promoter-proximal region of genes. The integrator complex provides a quality checkpoint during transcription elongation by driving premature transcription termination of transcripts that are unfavorably configured for transcriptional elongation: the complex terminates transcription by (1) catalyzing dephosphorylation of the C-terminal domain (CTD) of Pol II subunit Polr2A/Rbp1 and Spt5, and (2) degrading the exiting nascent RNA transcript via endonuclease activity. The integrator complex is also involved in the 3'-end processing of the U7 snRNA, and also the spliceosomal snRNAs U1, U2, U4 and U5. This Drosophila melanogaster (Fruit fly) protein is Integrator complex subunit 10.